The chain runs to 379 residues: Succinyl-diaminopimelate desuccinylase (379 aa).

H70 contacts Zn(2+). D72 is an active-site residue. D103 contributes to the Zn(2+) binding site. The Proton acceptor role is filled by E137. Zn(2+) is bound by residues E138, E166, and H352.

It belongs to the peptidase M20A family. DapE subfamily. Homodimer. Zn(2+) serves as cofactor. Requires Co(2+) as cofactor.

It carries out the reaction N-succinyl-(2S,6S)-2,6-diaminopimelate + H2O = (2S,6S)-2,6-diaminopimelate + succinate. It participates in amino-acid biosynthesis; L-lysine biosynthesis via DAP pathway; LL-2,6-diaminopimelate from (S)-tetrahydrodipicolinate (succinylase route): step 3/3. Functionally, catalyzes the hydrolysis of N-succinyl-L,L-diaminopimelic acid (SDAP), forming succinate and LL-2,6-diaminopimelate (DAP), an intermediate involved in the bacterial biosynthesis of lysine and meso-diaminopimelic acid, an essential component of bacterial cell walls. The polypeptide is Succinyl-diaminopimelate desuccinylase (Burkholderia mallei (strain NCTC 10247)).